A 172-amino-acid chain; its full sequence is Adenine phosphoribosyltransferase (172 aa).

The protein belongs to the purine/pyrimidine phosphoribosyltransferase family. Homodimer.

It is found in the cytoplasm. The enzyme catalyses AMP + diphosphate = 5-phospho-alpha-D-ribose 1-diphosphate + adenine. It participates in purine metabolism; AMP biosynthesis via salvage pathway; AMP from adenine: step 1/1. Catalyzes a salvage reaction resulting in the formation of AMP, that is energically less costly than de novo synthesis. This Clostridium kluyveri (strain NBRC 12016) protein is Adenine phosphoribosyltransferase.